A 558-amino-acid chain; its full sequence is MARVEL domain-containing protein 2 (558 aa).

Residues 1–16 are compositionally biased toward basic and acidic residues; sequence MSNDGRSRNRDRRYDE. Disordered stretches follow at residues 1–58 and 115–145; these read MSND…PPFG and CSPPASPARPNHRSPLNSCKDPYGGSEGTFS. At 1–194 the chain is on the cytoplasmic side; that stretch reads MSNDGRSRNR…YMKSWAGLLR (194 aa). A compositionally biased stretch (pro residues) spans 45–58; the sequence is PLPPPPLPLQPPFG. A phosphoserine mark is found at S116, S120, and S161. Phosphothreonine is present on T166. In terms of domain architecture, MARVEL spans 188–367; it reads SWAGLLRILG…SALVCLKLWR (180 aa). The helical transmembrane segment at 195-215 threads the bilayer; that stretch reads ILGVVELLLGAGVFACVTAYI. Residues 216-223 lie on the Extracellular side of the membrane; the sequence is HKDSEWYN. The chain crosses the membrane as a helical span at residues 224–244; that stretch reads LFGYSQPYGMGGVGGLGSMYG. At 245–254 the chain is on the cytoplasmic side; it reads GYYYTGPKTP. The chain crosses the membrane as a helical span at residues 255-275; the sequence is FVLVVAGLAWITTIIILVLGM. The Extracellular portion of the chain corresponds to 276–291; the sequence is SMYYRTILLDSNWWPL. A helical membrane pass occupies residues 292-312; it reads TEFGINVALFILYMAAAIVYV. The Cytoplasmic portion of the chain corresponds to 313 to 319; it reads NDTNRGG. A helical transmembrane segment spans residues 320–337; it reads LCYYPLFNTPVNAVFCRV. The Extracellular portion of the chain corresponds to 338-341; that stretch reads EGGQ. The chain crosses the membrane as a helical span at residues 342–362; sequence IAAMIFLFVTMIVYLISALVC. The Cytoplasmic portion of the chain corresponds to 363 to 558; sequence LKLWRHEAAR…VMNWDVQGYS (196 aa). At S387 the chain carries Phosphoserine. K412 is covalently cross-linked (Glycyl lysine isopeptide (Lys-Gly) (interchain with G-Cter in ubiquitin)). The stretch at 439 to 548 forms a coiled coil; the sequence is MPDYVAKYPV…IKQRIQEYDK (110 aa). Residues 440-551 form the OCEL domain; sequence PDYVAKYPVI…RIQEYDKVMN (112 aa).

The protein belongs to the ELL/occludin family. As to quaternary structure, interacts with TJP1. Interacts with the ubiquitin ligase ITCH. Interacts (via C-terminal cytoplasmic domain) with LSR (via the cytoplasmic domain), ILDR1 and ILDR2; the interaction is required to recruit MARVELD2 to tricellular contacts. Ubiquitinated by ITCH; but this ubiquitination does not lead to proteasomal degradation. Polyubiquitinated at Lys-412 via 'Lys-63'-linked ubiquitin chains; deubiquitinated by USP53. In terms of processing, phosphorylated.

The protein localises to the cell membrane. It is found in the cell junction. The protein resides in the tight junction. Its function is as follows. Plays a role in the formation of tricellular tight junctions and of epithelial barriers. Required for normal hearing via its role in the separation of the endolymphatic and perilymphatic spaces of the organ of Corti in the inner ear, and for normal survival of hair cells in the organ of Corti. This chain is MARVEL domain-containing protein 2, found in Homo sapiens (Human).